A 375-amino-acid polypeptide reads, in one-letter code: Glutamate 5-kinase (375 aa).

Lys17 provides a ligand contact to ATP. Ser58, Asp145, and Asn157 together coordinate substrate. ATP is bound by residues 177-178 and 219-225; these read SD and TGGMVTK. The PUA domain maps to 281 to 359; it reads QGALTLDDGA…RELARELGPA (79 aa).

It belongs to the glutamate 5-kinase family.

It is found in the cytoplasm. It catalyses the reaction L-glutamate + ATP = L-glutamyl 5-phosphate + ADP. The protein operates within amino-acid biosynthesis; L-proline biosynthesis; L-glutamate 5-semialdehyde from L-glutamate: step 1/2. Functionally, catalyzes the transfer of a phosphate group to glutamate to form L-glutamate 5-phosphate. The sequence is that of Glutamate 5-kinase from Streptomyces avermitilis (strain ATCC 31267 / DSM 46492 / JCM 5070 / NBRC 14893 / NCIMB 12804 / NRRL 8165 / MA-4680).